The chain runs to 77 residues: Large ribosomal subunit protein bL28 (77 aa).

A disordered region spans residues 1 to 25 (MARVCQVTGKAPMSGNNVSHANNKT).

The protein belongs to the bacterial ribosomal protein bL28 family.

In Paraburkholderia phytofirmans (strain DSM 17436 / LMG 22146 / PsJN) (Burkholderia phytofirmans), this protein is Large ribosomal subunit protein bL28.